Here is a 223-residue protein sequence, read N- to C-terminus: Sigma non-opioid intracellular receptor 1 (223 aa).

Over 1–9 the chain is Lumenal; that stretch reads MCWAVGRRW. The interval 2–8 is targeting to endoplasmic reticulum-associated lipid droplets; that stretch reads CWAVGRR. Residues 10–30 form a helical membrane-spanning segment; sequence AWAALLLAVAAVLAQVVWLWL. The Cytoplasmic portion of the chain corresponds to 31–223; sequence GTQSFVFQHE…LTTYLFGQDA (193 aa). An important for ligand-binding region spans residues 99–106; it reads SLSEYVLL. The tract at residues 177–223 is C-terminal hydrophobic region; that stretch reads VIPSTLGFALADTVFSTQDFLTLFYTLRAYARGLRLELTTYLFGQDA.

The protein belongs to the ERG2 family. As to quaternary structure, homotrimer. Forms a ternary complex with ANK2 and ITPR3. The complex is disrupted by agonists. Interacts with KCNA4. Interacts with KCNA2; cocaine consumption leads to increased interaction. Interacts with RNF112 in an oxidative stress-regulated manner.

It localises to the nucleus inner membrane. The protein localises to the nucleus outer membrane. Its subcellular location is the nucleus envelope. The protein resides in the cytoplasmic vesicle. It is found in the endoplasmic reticulum membrane. It localises to the membrane. The protein localises to the lipid droplet. Its subcellular location is the cell junction. The protein resides in the cell membrane. It is found in the cell projection. It localises to the growth cone. The protein localises to the postsynaptic density membrane. Functionally, functions in lipid transport from the endoplasmic reticulum and is involved in a wide array of cellular functions probably through regulation of the biogenesis of lipid microdomains at the plasma membrane. Involved in the regulation of different receptors it plays a role in BDNF signaling and EGF signaling. Also regulates ion channels like the potassium channel and could modulate neurotransmitter release. Plays a role in calcium signaling through modulation together with ANK2 of the ITP3R-dependent calcium efflux at the endoplasmic reticulum. Plays a role in several other cell functions including proliferation, survival and death. Originally identified for its ability to bind various psychoactive drugs it is involved in learning processes, memory and mood alteration. Necessary for proper mitochondrial axonal transport in motor neurons, in particular the retrograde movement of mitochondria. Plays a role in protecting cells against oxidative stress-induced cell death via its interaction with RNF112. This Bos taurus (Bovine) protein is Sigma non-opioid intracellular receptor 1 (SIGMAR1).